Consider the following 456-residue polypeptide: Histidine--tRNA ligase (456 aa).

This sequence belongs to the class-II aminoacyl-tRNA synthetase family. As to quaternary structure, homodimer.

It is found in the cytoplasm. It carries out the reaction tRNA(His) + L-histidine + ATP = L-histidyl-tRNA(His) + AMP + diphosphate + H(+). This chain is Histidine--tRNA ligase (hisS), found in Borreliella burgdorferi (strain ATCC 35210 / DSM 4680 / CIP 102532 / B31) (Borrelia burgdorferi).